The sequence spans 256 residues: Ribosomal RNA small subunit methyltransferase J (256 aa).

Residues 101–102 (RD), 117–118 (ER), and D174 each bind S-adenosyl-L-methionine.

It belongs to the methyltransferase superfamily. RsmJ family.

It is found in the cytoplasm. It catalyses the reaction guanosine(1516) in 16S rRNA + S-adenosyl-L-methionine = N(2)-methylguanosine(1516) in 16S rRNA + S-adenosyl-L-homocysteine + H(+). Its function is as follows. Specifically methylates the guanosine in position 1516 of 16S rRNA. This is Ribosomal RNA small subunit methyltransferase J from Chromohalobacter salexigens (strain ATCC BAA-138 / DSM 3043 / CIP 106854 / NCIMB 13768 / 1H11).